The chain runs to 189 residues: Thymidine kinase (189 aa).

ATP contacts are provided by residues 9–16 (GTMNSGKT) and 85–88 (DESQ). E86 serves as the catalytic Proton acceptor. The Zn(2+) site is built by C143, C146, C180, and H183.

The protein belongs to the thymidine kinase family. As to quaternary structure, homotetramer.

Its subcellular location is the cytoplasm. The catalysed reaction is thymidine + ATP = dTMP + ADP + H(+). The polypeptide is Thymidine kinase (Streptococcus pyogenes serotype M18 (strain MGAS8232)).